The chain runs to 463 residues: A-type ATP synthase subunit B (463 aa).

It belongs to the ATPase alpha/beta chains family. Has multiple subunits with at least A(3), B(3), C, D, E, F, H, I and proteolipid K(x).

The protein localises to the cell membrane. Its function is as follows. Component of the A-type ATP synthase that produces ATP from ADP in the presence of a proton gradient across the membrane. The B chain is a regulatory subunit. This Saccharolobus islandicus (strain Y.N.15.51 / Yellowstone #2) (Sulfolobus islandicus) protein is A-type ATP synthase subunit B.